Consider the following 186-residue polypeptide: Thiol:disulfide interchange protein CycY (186 aa).

The signal sequence occupies residues 1–20; that stretch reads MGRYTLALLPLIVFGGIAHG. The 136-residue stretch at 47-182 folds into the Thioredoxin domain; that stretch reads DAEPAAARRA…LVPAMEKALG (136 aa). Cys-80 and Cys-83 are joined by a disulfide.

The protein belongs to the thioredoxin family. DsbE subfamily.

Its subcellular location is the periplasm. Its function is as follows. Required for disulfide bond formation in some periplasmic proteins. Also acts as a disulfide oxidoreductase in cytochromes c biogenesis. The cysteines of apocytochromes c must be in the reduced state for covalent linkage between the two moieties to occur. This Rhizobium leguminosarum bv. viciae protein is Thiol:disulfide interchange protein CycY (cycY).